The primary structure comprises 78 residues: WAP four-disulfide core domain protein 12 (78 aa).

Residues 1-21 (MWPNSILVLTVLLISSTLVTG) form the signal peptide. The 48-residue stretch at 25-72 (KGAEKGVCPPDNVRCIRGEDPQCHNDNDCKDQKICCYWHCGFKCVQPV) folds into the WAP domain. 4 cysteine pairs are disulfide-bonded: Cys32-Cys60, Cys39-Cys64, Cys47-Cys59, and Cys53-Cys68.

The protein resides in the secreted. Functionally, antibacterial protein. Putative acid-stable proteinase inhibitor. The sequence is that of WAP four-disulfide core domain protein 12 from Rattus norvegicus (Rat).